Reading from the N-terminus, the 38-residue chain is Toxic protein TimP (38 aa).

Over 1 to 20 the chain traverses the membrane; sequence MKVRCFCVVLLVSGTLCLHA.

This sequence belongs to the TimP toxin family.

It is found in the cell inner membrane. Toxic component of a probable type I toxin-antitoxin (TA) system. Neutralized by sRNA antitoxin TimR which binds to the 5' UTR of timP mRNA and inhibits translation. When TimP is expressed from its promoter in the absence of antitoxin leads to mild cell stress; overexpression in situ is toxic to the cell and causes membrane leakage. The antitoxin gene is encoded immediately upstream and transcribed divergently from the toxin gene; antitoxin RNA is less stable than timP mRNA. This chain is Toxic protein TimP, found in Salmonella typhimurium (strain SL1344).